We begin with the raw amino-acid sequence, 130 residues long: Small ribosomal subunit protein uS9 (130 aa).

The protein belongs to the universal ribosomal protein uS9 family.

The protein is Small ribosomal subunit protein uS9 of Burkholderia cenocepacia (strain HI2424).